We begin with the raw amino-acid sequence, 218 residues long: uncharacterized protein (218 aa).

The CN hydrolase domain occupies 4–207; sequence WKVAAAQYEP…SLLLVGQRSS (204 aa).

This is an uncharacterized protein from Escherichia coli (strain K12).